The following is a 236-amino-acid chain: LexA repressor (236 aa).

Positions F26 to T46 form a DNA-binding region, H-T-H motif. Catalysis depends on for autocatalytic cleavage activity residues S157 and K195.

The protein belongs to the peptidase S24 family. In terms of assembly, homodimer.

It catalyses the reaction Hydrolysis of Ala-|-Gly bond in repressor LexA.. In terms of biological role, represses a number of genes involved in the response to DNA damage (SOS response), including recA and lexA. In the presence of single-stranded DNA, RecA interacts with LexA causing an autocatalytic cleavage which disrupts the DNA-binding part of LexA, leading to derepression of the SOS regulon and eventually DNA repair. This chain is LexA repressor, found in Azorhizobium caulinodans (strain ATCC 43989 / DSM 5975 / JCM 20966 / LMG 6465 / NBRC 14845 / NCIMB 13405 / ORS 571).